The sequence spans 496 residues: Probable glycine dehydrogenase (decarboxylating) subunit 2 (496 aa).

Lys265 carries the post-translational modification N6-(pyridoxal phosphate)lysine.

Belongs to the GcvP family. C-terminal subunit subfamily. As to quaternary structure, the glycine cleavage system is composed of four proteins: P, T, L and H. In this organism, the P 'protein' is a heterodimer of two subunits. Pyridoxal 5'-phosphate is required as a cofactor.

It catalyses the reaction N(6)-[(R)-lipoyl]-L-lysyl-[glycine-cleavage complex H protein] + glycine + H(+) = N(6)-[(R)-S(8)-aminomethyldihydrolipoyl]-L-lysyl-[glycine-cleavage complex H protein] + CO2. Functionally, the glycine cleavage system catalyzes the degradation of glycine. The P protein binds the alpha-amino group of glycine through its pyridoxal phosphate cofactor; CO(2) is released and the remaining methylamine moiety is then transferred to the lipoamide cofactor of the H protein. The sequence is that of Probable glycine dehydrogenase (decarboxylating) subunit 2 from Thioalkalivibrio sulfidiphilus (strain HL-EbGR7).